The chain runs to 281 residues: Pantothenate synthetase (281 aa).

30–37 (MGALHAGH) is an ATP binding site. His-37 acts as the Proton donor in catalysis. Residue Gln-64 participates in (R)-pantoate binding. Position 64 (Gln-64) interacts with beta-alanine. Residue 150-153 (GKKD) coordinates ATP. Gln-156 contacts (R)-pantoate. Residues Val-179 and 187-190 (YSSR) each bind ATP.

The protein belongs to the pantothenate synthetase family. In terms of assembly, homodimer.

It localises to the cytoplasm. The catalysed reaction is (R)-pantoate + beta-alanine + ATP = (R)-pantothenate + AMP + diphosphate + H(+). Its pathway is cofactor biosynthesis; (R)-pantothenate biosynthesis; (R)-pantothenate from (R)-pantoate and beta-alanine: step 1/1. Functionally, catalyzes the condensation of pantoate with beta-alanine in an ATP-dependent reaction via a pantoyl-adenylate intermediate. The chain is Pantothenate synthetase from Akkermansia muciniphila (strain ATCC BAA-835 / DSM 22959 / JCM 33894 / BCRC 81048 / CCUG 64013 / CIP 107961 / Muc).